The primary structure comprises 146 residues: MSLKAWLGIDKIQKFGQMVKEIGGVKAVLKKRYLMDATRVGTLVGSDNFGNRYYENNAYFVPRNRWVEFPDKVWLDYDATQVPPEWHSWLHHITDDAPSVKPPPTQDWVLEHKENTSIYADKKYVPYSTTRTKIQGWQPGEKPQFD.

This sequence belongs to the complex I NDUFA12 subunit family. In terms of assembly, complex I is composed of 45 different subunits.

It is found in the mitochondrion inner membrane. Accessory subunit of the mitochondrial membrane respiratory chain NADH dehydrogenase (Complex I), that is believed not to be involved in catalysis. Complex I functions in the transfer of electrons from NADH to the respiratory chain. The immediate electron acceptor for the enzyme is believed to be ubiquinone. The chain is Probable NADH dehydrogenase [ubiquinone] 1 alpha subcomplex subunit 12 from Caenorhabditis elegans.